Here is a 396-residue protein sequence, read N- to C-terminus: Probable sugar efflux transporter (396 aa).

Helical transmembrane passes span 15–35 (VVTL…PVGL), 50–70 (VGIM…PFML), 81–101 (LICL…SWSF), 103–123 (VLVI…SITA), 136–156 (AQAL…GLPL), 170–190 (FFAI…LLPL), 209–229 (PALM…YTAY), 246–266 (FATA…VIFG), 275–295 (ALVS…LPAA), 299–319 (IHLG…GLGM), 333–353 (VAMA…ALVG), and 364–384 (MIGY…IIIF).

It belongs to the major facilitator superfamily. SotB (TC 2.A.1.2) family.

It is found in the cell inner membrane. Functionally, involved in the efflux of sugars. The physiological role may be the reduction of the intracellular concentration of toxic sugars or sugar metabolites. The protein is Probable sugar efflux transporter of Escherichia coli O6:K15:H31 (strain 536 / UPEC).